Here is a 171-residue protein sequence, read N- to C-terminus: MPLLDSFTVDHTRMEAPAVRVAKTMNTPHGDAITVFDLRFCVPNKEVMPERGIHTLEHLFAGFMRNHLNGNGVEIIDISPMGCRTGFYMSLIGTPDEQRVADAWKAAMEDVLKVQDQNQIPELNVYQCGTYQMHSLQEAQDIARNILERDVRINSNEELALPKEKLQELHI.

Residues His54, His58, and Cys128 each contribute to the Fe cation site.

It belongs to the LuxS family. Homodimer. Requires Fe cation as cofactor.

It carries out the reaction S-(5-deoxy-D-ribos-5-yl)-L-homocysteine = (S)-4,5-dihydroxypentane-2,3-dione + L-homocysteine. In terms of biological role, involved in the synthesis of autoinducer 2 (AI-2) which is secreted by bacteria and is used to communicate both the cell density and the metabolic potential of the environment. The regulation of gene expression in response to changes in cell density is called quorum sensing. Catalyzes the transformation of S-ribosylhomocysteine (RHC) to homocysteine (HC) and 4,5-dihydroxy-2,3-pentadione (DPD). This chain is S-ribosylhomocysteine lyase, found in Escherichia coli O81 (strain ED1a).